The sequence spans 462 residues: Violaxanthin de-epoxidase, chloroplastic (462 aa).

A disulfide bridge links Cys-231 with Cys-362. The stretch at 372–437 (IEKTVEEGER…RELSKEEMEF (66 aa)) forms a coiled coil. Positions 380–391 (ERIIVKEVEEIE) are involved in the binding to the thylakoid membrane.

This sequence belongs to the calycin superfamily. Lipocalin family. In terms of assembly, interacts in vitro with LTO1.

Its subcellular location is the plastid. The protein localises to the chloroplast thylakoid membrane. The enzyme catalyses all-trans-violaxanthin + 2 L-ascorbate = all-trans-zeaxanthin + 2 L-dehydroascorbate + 2 H2O. Activity limited by low ascorbate availability. Feedback inhibition by zeaxanthin. Requires the presence of micelle-forming lipids such as monogalactosyldiacylglyceride (MGDG). Low concentration of bilayer forming lipids, such as digalactosyldiacylglyceride (DGDG) or phosphatidylcholine, supports a slower but nearly complete activity. 80% of the specific activity in lumenal chloroplast fractions is lost in vitro in the presence of reduced thioredoxin. Part of the xanthophyll (or violaxanthin) cycle for controlling the concentration of zeaxanthin in chloroplasts. Catalyzes the two-step mono de-epoxidation reaction. Stereospecific for all-trans xanthophylls. Zeaxanthin induces the dissipation of excitation energy in the chlorophyll of the light-harvesting protein complex of photosystem II. The sequence is that of Violaxanthin de-epoxidase, chloroplastic from Arabidopsis thaliana (Mouse-ear cress).